We begin with the raw amino-acid sequence, 102 residues long: Small ribosomal subunit protein uS10 (102 aa).

It belongs to the universal ribosomal protein uS10 family. As to quaternary structure, part of the 30S ribosomal subunit.

Its function is as follows. Involved in the binding of tRNA to the ribosomes. This is Small ribosomal subunit protein uS10 from Roseiflexus sp. (strain RS-1).